Consider the following 120-residue polypeptide: Ribonuclease P protein component (120 aa).

Belongs to the RnpA family. In terms of assembly, consists of a catalytic RNA component (M1 or rnpB) and a protein subunit.

The catalysed reaction is Endonucleolytic cleavage of RNA, removing 5'-extranucleotides from tRNA precursor.. Its function is as follows. RNaseP catalyzes the removal of the 5'-leader sequence from pre-tRNA to produce the mature 5'-terminus. It can also cleave other RNA substrates such as 4.5S RNA. The protein component plays an auxiliary but essential role in vivo by binding to the 5'-leader sequence and broadening the substrate specificity of the ribozyme. The sequence is that of Ribonuclease P protein component from Dehalococcoides mccartyi (strain CBDB1).